Here is a 320-residue protein sequence, read N- to C-terminus: tRNA uridine(34) hydroxylase (320 aa).

The region spanning Glu-123–Leu-217 is the Rhodanese domain. Cys-177 (cysteine persulfide intermediate) is an active-site residue.

The protein belongs to the TrhO family.

It catalyses the reaction uridine(34) in tRNA + AH2 + O2 = 5-hydroxyuridine(34) in tRNA + A + H2O. Functionally, catalyzes oxygen-dependent 5-hydroxyuridine (ho5U) modification at position 34 in tRNAs. In Staphylococcus epidermidis (strain ATCC 35984 / DSM 28319 / BCRC 17069 / CCUG 31568 / BM 3577 / RP62A), this protein is tRNA uridine(34) hydroxylase.